Here is an 895-residue protein sequence, read N- to C-terminus: Protein translocase subunit SecA (895 aa).

ATP is bound by residues Gln-90, 108–112 (GEGKS), and Asp-498.

This sequence belongs to the SecA family.

It is found in the plastid. The protein resides in the chloroplast stroma. Its subcellular location is the chloroplast thylakoid membrane. The catalysed reaction is ATP + H2O + cellular proteinSide 1 = ADP + phosphate + cellular proteinSide 2.. Functionally, has a central role in coupling the hydrolysis of ATP to the transfer of proteins across the thylakoid membrane. In Cyanidium caldarium (Red alga), this protein is Protein translocase subunit SecA.